The primary structure comprises 341 residues: HTH-type transcriptional repressor PurR (341 aa).

One can recognise an HTH lacI-type domain in the interval 2 to 56 (ATIKDVAKRANVSTTTVSHVINKTRFVAEETRNAVWAAIKELHYSPSAVARSLKV). Positions 4 to 23 (IKDVAKRANVSTTTVSHVIN) form a DNA-binding region, H-T-H motif. A DNA-binding region spans residues 48–56 (SAVARSLKV). Residues tyrosine 73, arginine 190, threonine 192, phenylalanine 221, and aspartate 275 each contribute to the hypoxanthine site.

As to quaternary structure, homodimer.

It participates in purine metabolism; purine nucleotide biosynthesis [regulation]. Is the main repressor of the genes involved in the de novo synthesis of purine nucleotides, regulating purB, purC, purEK, purF, purHD, purL, purMN and guaBA expression. PurR is allosterically activated to bind its cognate DNA by binding the purine corepressors, hypoxanthine or guanine, thereby effecting transcription repression. The chain is HTH-type transcriptional repressor PurR from Shigella dysenteriae serotype 1 (strain Sd197).